We begin with the raw amino-acid sequence, 191 residues long: Peptidyl-tRNA hydrolase (191 aa).

Position 16 (Tyr-16) interacts with tRNA. His-21 serves as the catalytic Proton acceptor. 3 residues coordinate tRNA: Phe-66, Asn-68, and Asn-114.

This sequence belongs to the PTH family. Monomer.

The protein localises to the cytoplasm. The catalysed reaction is an N-acyl-L-alpha-aminoacyl-tRNA + H2O = an N-acyl-L-amino acid + a tRNA + H(+). Hydrolyzes ribosome-free peptidyl-tRNAs (with 1 or more amino acids incorporated), which drop off the ribosome during protein synthesis, or as a result of ribosome stalling. Functionally, catalyzes the release of premature peptidyl moieties from peptidyl-tRNA molecules trapped in stalled 50S ribosomal subunits, and thus maintains levels of free tRNAs and 50S ribosomes. The protein is Peptidyl-tRNA hydrolase of Geotalea daltonii (strain DSM 22248 / JCM 15807 / FRC-32) (Geobacter daltonii).